Consider the following 90-residue polypeptide: DNA-directed RNA polymerase subunit omega (90 aa).

It belongs to the RNA polymerase subunit omega family. In terms of assembly, the RNAP catalytic core consists of 2 alpha, 1 beta, 1 beta' and 1 omega subunit. When a sigma factor is associated with the core the holoenzyme is formed, which can initiate transcription.

It catalyses the reaction RNA(n) + a ribonucleoside 5'-triphosphate = RNA(n+1) + diphosphate. In terms of biological role, promotes RNA polymerase assembly. Latches the N- and C-terminal regions of the beta' subunit thereby facilitating its interaction with the beta and alpha subunits. This is DNA-directed RNA polymerase subunit omega from Saccharophagus degradans (strain 2-40 / ATCC 43961 / DSM 17024).